The primary structure comprises 515 residues: Mucin-like protein Glc1.8b (515 aa).

The first 20 residues, 1–20 (MSQITLIILVLAIGFSCTKS), serve as a signal peptide directing secretion. Residues 21 to 467 (HPINSTRDGE…ANDIKKPAFP (447 aa)) lie on the Extracellular side of the membrane. N-linked (GlcNAc...) asparagine; by host glycosylation is found at N24, N45, N51, N60, N85, N93, N102, N123, N129, N138, N180, N201, N207, N216, N258, N279, N285, N294, N319, N327, N336, N357, N363, N372, N397, N405, N413, N434, and N441. The interval 80–114 (SKKDENITGQSEINTSAKSQPINSTRDGEDSGTDL) is disordered. Polar residues predominate over residues 86–104 (ITGQSEINTSAKSQPINST). The segment at 314–358 (SKKDENITGQSEINTSAKSQPINSTRDGEDSGTDLKNLLTDPANT) is disordered. Positions 320–338 (ITGQSEINTSAKSQPINST) are enriched in polar residues. Positions 393–413 (RKDENVTGQSEFNISTNSNLN) are disordered. The chain crosses the membrane as a helical span at residues 468-488 (YCIILITFQIVTVGMIIYLVF). Residues 489-515 (RTMRKPCQSERAIPLNSFGFGNNSSYE) are Cytoplasmic-facing.

The protein belongs to the polydnaviridae Glc1.8 protein family.

Its subcellular location is the host membrane. In terms of biological role, involved in suppression of the insect cellular immune response. Inhibits host hemocyte adhesion and phagocytosis. In Microplitis demolitor (Parasitoid wasp), this protein is Mucin-like protein Glc1.8b (O16).